Consider the following 393-residue polypeptide: Putative bacilysin exporter BacE (393 aa).

Transmembrane regions (helical) follow at residues 11–31, 43–63, 69–89, 92–112, 133–155, 160–177, 215–235, 244–264, 287–307, and 353–373; these read LLFG…ALLI, SGVI…GVLV, VKIM…LTFL, GEYP…GVFF, LFAK…FLLG, LAVA…FFIS, MFTM…FPIV, IGNF…AALV, ALFL…LFFI, and IVDA…LFLH.

This sequence belongs to the major facilitator superfamily.

The protein localises to the cell membrane. In terms of biological role, part of the bacilysin biosynthesis operon. May be involved in self-resistance to bacilysin by permitting efflux of this antibiotic. The chain is Putative bacilysin exporter BacE (bacE) from Bacillus subtilis.